The sequence spans 454 residues: Nuclear distribution protein PAC1-1 (454 aa).

Residues 9-41 (QAEELHRALIAYLSSNNLTSTAAALRAEIGLGE) enclose the LisH domain. The disordered stretch occupies residues 71-93 (RHTSQLSNATPTSRQNKDPVNWL). Over residues 73-84 (TSQLSNATPTSR) the composition is skewed to polar residues. 7 WD repeats span residues 104–145 (SHRQ…RTIK), 147–187 (HTKT…KNIR), 191–236 (GHDH…CVKT), 239–278 (GHAE…PEPK), 283–342 (GHEH…IKIL), 344–383 (GHDN…RCVK), and 388–450 (AHAH…LNVR).

The protein belongs to the WD repeat LIS1/nudF family. As to quaternary structure, self-associates. Interacts with NDL1 and dynein.

The protein localises to the cytoplasm. Its subcellular location is the cytoskeleton. It is found in the spindle pole. Its function is as follows. Positively regulates the activity of the minus-end directed microtubule motor protein dynein. May enhance dynein-mediated microtubule sliding by targeting dynein to the microtubule plus end. Required for nuclear migration during vegetative growth as well as development. Required for retrograde early endosome (EE) transport from the hyphal tip. Required for localization of dynein to the mitotic spindle poles. Recruits additional proteins to the dynein complex at SPBs. The polypeptide is Nuclear distribution protein PAC1-1 (Chaetomium globosum (strain ATCC 6205 / CBS 148.51 / DSM 1962 / NBRC 6347 / NRRL 1970) (Soil fungus)).